The chain runs to 536 residues: uncharacterized protein (536 aa).

One can recognise a Radical SAM core domain in the interval Leu163 to Glu394. Residues Cys177, Cys181, and Cys184 each contribute to the [4Fe-4S] cluster site.

[4Fe-4S] cluster serves as cofactor.

This is an uncharacterized protein from Synechocystis sp. (strain ATCC 27184 / PCC 6803 / Kazusa).